The chain runs to 67 residues: DNA-directed RNA polymerase subunit omega (67 aa).

It belongs to the RNA polymerase subunit omega family. As to quaternary structure, the RNAP catalytic core consists of 2 alpha, 1 beta, 1 beta' and 1 omega subunit. When a sigma factor is associated with the core the holoenzyme is formed, which can initiate transcription.

The enzyme catalyses RNA(n) + a ribonucleoside 5'-triphosphate = RNA(n+1) + diphosphate. Functionally, promotes RNA polymerase assembly. Latches the N- and C-terminal regions of the beta' subunit thereby facilitating its interaction with the beta and alpha subunits. The protein is DNA-directed RNA polymerase subunit omega of Polynucleobacter asymbioticus (strain DSM 18221 / CIP 109841 / QLW-P1DMWA-1) (Polynucleobacter necessarius subsp. asymbioticus).